Consider the following 888-residue polypeptide: Inactive deaminase YJL070C (888 aa).

Residues 1-42 (MQAVERRPSLLFDEYQNSVTKPNETKNKEARVLSENDGDVSP) are disordered. Serine 9 is modified (phosphoserine). Positions 23 to 34 (NETKNKEARVLS) are enriched in basic and acidic residues. A phosphoserine mark is found at serine 41, serine 178, and serine 180.

It belongs to the metallo-dependent hydrolases superfamily. Adenosine and AMP deaminases family.

In Saccharomyces cerevisiae (strain ATCC 204508 / S288c) (Baker's yeast), this protein is Inactive deaminase YJL070C.